Consider the following 445-residue polypeptide: ATP-dependent protease ATPase subunit HslU (445 aa).

ATP-binding positions include isoleucine 17, 59–64, aspartate 254, glutamate 319, and arginine 391; that span reads GVGKTE.

The protein belongs to the ClpX chaperone family. HslU subfamily. In terms of assembly, a double ring-shaped homohexamer of HslV is capped on each side by a ring-shaped HslU homohexamer. The assembly of the HslU/HslV complex is dependent on binding of ATP.

The protein localises to the cytoplasm. In terms of biological role, ATPase subunit of a proteasome-like degradation complex; this subunit has chaperone activity. The binding of ATP and its subsequent hydrolysis by HslU are essential for unfolding of protein substrates subsequently hydrolyzed by HslV. HslU recognizes the N-terminal part of its protein substrates and unfolds these before they are guided to HslV for hydrolysis. The protein is ATP-dependent protease ATPase subunit HslU of Pseudomonas syringae pv. tomato (strain ATCC BAA-871 / DC3000).